The primary structure comprises 353 residues: MSSSYSSRAEKYDLISCKDLTWDLSRSHLTTQYKSFYMCFDDGSFGYLQIAYGNLGLLVKVTPLGWTYYPAKTEKNVEPIVNSSTYLYRSMKISKDRYSVDVQKHFMHFNSSTREWHIVIEGVYDLKIKTEDSGFSLVDFGQNDSSSRMEHKIFPINTVEGTVTAHGREKKLTGVAVYVGALFFREKFTNLGHTWQNSILFDKSKKSILTCLHYFPRDPSQPFRSQASLTLDGKLIAVLLDNEYSTKGAAQVDGIRYLLPEQIHRILSGQTFDGKPVRVELSAELEELDSITDVLKIFPKWAKDIVSIWAGLPFVFVWLQHITAEVFIDNEHVATLSGCYYLEQTCVHLPQTC.

This sequence belongs to the SVF1 family.

The protein resides in the cytoplasm. The protein localises to the nucleus. The chain is Survival factor 2 (svf2) from Schizosaccharomyces pombe (strain 972 / ATCC 24843) (Fission yeast).